The primary structure comprises 81 residues: MTYFVFFLGICFVVGVLGVASNPSPYYGVVGLVLASVAGCGWLLSLGVSFVALVLFMVYFGGMLVVFVYSVALAAEPFPEA.

The next 3 helical transmembrane spans lie at 1–21 (MTYF…GVAS), 27–47 (YGVV…LSLG), and 48–68 (VSFV…VVFV).

The protein belongs to the complex I subunit 6 family.

It localises to the mitochondrion membrane. It carries out the reaction a ubiquinone + NADH + 5 H(+)(in) = a ubiquinol + NAD(+) + 4 H(+)(out). Core subunit of the mitochondrial membrane respiratory chain NADH dehydrogenase (Complex I) that is believed to belong to the minimal assembly required for catalysis. Complex I functions in the transfer of electrons from NADH to the respiratory chain. The immediate electron acceptor for the enzyme is believed to be ubiquinone. This Anas platyrhynchos (Mallard) protein is NADH-ubiquinone oxidoreductase chain 6 (MT-ND6).